Here is a 618-residue protein sequence, read N- to C-terminus: Proline--tRNA ligase (618 aa).

The protein belongs to the class-II aminoacyl-tRNA synthetase family. ProS type 1 subfamily. Homodimer.

It localises to the cytoplasm. The enzyme catalyses tRNA(Pro) + L-proline + ATP = L-prolyl-tRNA(Pro) + AMP + diphosphate. Catalyzes the attachment of proline to tRNA(Pro) in a two-step reaction: proline is first activated by ATP to form Pro-AMP and then transferred to the acceptor end of tRNA(Pro). As ProRS can inadvertently accommodate and process non-cognate amino acids such as alanine and cysteine, to avoid such errors it has two additional distinct editing activities against alanine. One activity is designated as 'pretransfer' editing and involves the tRNA(Pro)-independent hydrolysis of activated Ala-AMP. The other activity is designated 'posttransfer' editing and involves deacylation of mischarged Ala-tRNA(Pro). The misacylated Cys-tRNA(Pro) is not edited by ProRS. This chain is Proline--tRNA ligase, found in Streptococcus uberis (strain ATCC BAA-854 / 0140J).